The chain runs to 475 residues: Aspartyl/glutamyl-tRNA(Asn/Gln) amidotransferase subunit B (475 aa).

Belongs to the GatB/GatE family. GatB subfamily. Heterotrimer of A, B and C subunits.

It carries out the reaction L-glutamyl-tRNA(Gln) + L-glutamine + ATP + H2O = L-glutaminyl-tRNA(Gln) + L-glutamate + ADP + phosphate + H(+). The enzyme catalyses L-aspartyl-tRNA(Asn) + L-glutamine + ATP + H2O = L-asparaginyl-tRNA(Asn) + L-glutamate + ADP + phosphate + 2 H(+). Allows the formation of correctly charged Asn-tRNA(Asn) or Gln-tRNA(Gln) through the transamidation of misacylated Asp-tRNA(Asn) or Glu-tRNA(Gln) in organisms which lack either or both of asparaginyl-tRNA or glutaminyl-tRNA synthetases. The reaction takes place in the presence of glutamine and ATP through an activated phospho-Asp-tRNA(Asn) or phospho-Glu-tRNA(Gln). This chain is Aspartyl/glutamyl-tRNA(Asn/Gln) amidotransferase subunit B, found in Thiobacillus denitrificans (strain ATCC 25259 / T1).